The primary structure comprises 468 residues: Zinc-regulated transporter 1 (468 aa).

Positions 1 to 17 (MKFTHLFFIGLLTKVYT) are cleaved as a signal peptide. Topologically, residues 18–185 (ETVTVLSTRS…VKRDYDIPLR (168 aa)) are extracellular. N-linked (GlcNAc...) asparagine glycosylation is found at Asn57 and Asn67. A helical membrane pass occupies residues 186-206 (IGLLFVILVTSGIGSFGPIVL). Topologically, residues 207–217 (KQFVNLSQENY) are cytoplasmic. Residues 218 to 238 (IIVIIKQFGTGIIISTAFVHL) form a helical membrane-spanning segment. The Extracellular portion of the chain corresponds to 239-257 (MTHAQLMWSNSCLKIKYEG). The helical transmembrane segment at 258 to 278 (TGASITMAGIFIAFIIEYIAL) threads the bilayer. The Cytoplasmic portion of the chain corresponds to 279–314 (RIVNARDTGKVDKKEIEETSSNEQSLHGISVNDKIS). The helical transmembrane segment at 315-335 (VMILEAGIIFHSILIGITLVV) threads the bilayer. Topologically, residues 336–338 (TDD) are extracellular. The helical transmembrane segment at 339-359 (VYFITLFIVIVFHQFFEGLAL) threads the bilayer. The Cytoplasmic segment spans residues 360–374 (SSRIISITNASLSTK). A helical membrane pass occupies residues 375-395 (LVMALMFALITPIGMAIGIGV). Over 396 to 406 (LNKFNGNDPST) the chain is Extracellular. Residues 407–427 (LIALGTLDSFSAGVLLWTGLI) traverse the membrane as a helical segment. At 428 to 447 (EMWSHDWLHGHLRNSSFVKT) the chain is on the cytoplasmic side. The helical transmembrane segment at 448–468 (TVALVSLILGMLLMSLLGNWA) threads the bilayer.

It belongs to the ZIP transporter (TC 2.A.5) family.

The protein resides in the cell membrane. The enzyme catalyses Zn(2+)(in) = Zn(2+)(out). Functionally, zinc transporter that acts with PRA1 in sequestration of zinc from host tissues during infection. The pH-regulated antigen 1 (PRA1) binds zinc from its environment and then reassociates with ZRT1 to acquire this essential metal. This Candida albicans (strain SC5314 / ATCC MYA-2876) (Yeast) protein is Zinc-regulated transporter 1 (ZRT101).